We begin with the raw amino-acid sequence, 118 residues long: V-type proton ATPase subunit G 1 (118 aa).

Ala-2 carries the N-acetylalanine modification. The interval 19–42 is disordered; sequence AEKVSEARKRKNRRLKQAKEEAQA.

The protein belongs to the V-ATPase G subunit family. In terms of assembly, V-ATPase is a heteromultimeric enzyme made up of two complexes: the ATP-hydrolytic V1 complex and the proton translocation V0 complex. The V1 complex consists of three catalytic AB heterodimers that form a heterohexamer, three peripheral stalks each consisting of EG heterodimers, one central rotor including subunits D and F, and the regulatory subunits C and H. The proton translocation complex V0 consists of the proton transport subunit a, a ring of proteolipid subunits c9c'', rotary subunit d, subunits e and f, and the accessory subunits ATP6AP1/Ac45 and ATP6AP2/PRR. Brain, heart, kidney and spleen.

The protein localises to the apical cell membrane. Subunit of the V1 complex of vacuolar(H+)-ATPase (V-ATPase), a multisubunit enzyme composed of a peripheral complex (V1) that hydrolyzes ATP and a membrane integral complex (V0) that translocates protons. V-ATPase is responsible for acidifying and maintaining the pH of intracellular compartments and in some cell types, is targeted to the plasma membrane, where it is responsible for acidifying the extracellular environment. In aerobic conditions, involved in intracellular iron homeostasis, thus triggering the activity of Fe(2+) prolyl hydroxylase (PHD) enzymes, and leading to HIF1A hydroxylation and subsequent proteasomal degradation. The protein is V-type proton ATPase subunit G 1 (ATP6V1G1) of Bos taurus (Bovine).